We begin with the raw amino-acid sequence, 76 residues long: Acyl carrier protein (76 aa).

Positions 1 to 76 (MSIEERVKKI…SAIDYVQNNQ (76 aa)) constitute a Carrier domain. S36 is modified (O-(pantetheine 4'-phosphoryl)serine).

Belongs to the acyl carrier protein (ACP) family. In terms of processing, 4'-phosphopantetheine is transferred from CoA to a specific serine of apo-ACP by AcpS. This modification is essential for activity because fatty acids are bound in thioester linkage to the sulfhydryl of the prosthetic group.

The protein localises to the cytoplasm. It participates in lipid metabolism; fatty acid biosynthesis. Functionally, carrier of the growing fatty acid chain in fatty acid biosynthesis. This chain is Acyl carrier protein, found in Haemophilus influenzae (strain 86-028NP).